Here is an 84-residue protein sequence, read N- to C-terminus: UPF0386 protein NGR_c10980 (84 aa).

The protein belongs to the UPF0386 family.

The protein is UPF0386 protein NGR_c10980 of Sinorhizobium fredii (strain NBRC 101917 / NGR234).